We begin with the raw amino-acid sequence, 142 residues long: Photosystem II extrinsic protein U (142 aa).

The first 29 residues, 1–29, serve as a signal peptide directing secretion; the sequence is MKGLVRLLTVFSLLLGCWGWLGTTQIAQA.

Belongs to the PsbU family. In terms of assembly, PSII is composed of 1 copy each of membrane proteins PsbA, PsbB, PsbC, PsbD, PsbE, PsbF, PsbH, PsbI, PsbJ, PsbK, PsbL, PsbM, PsbT, PsbX, PsbY, PsbZ, Psb30/Ycf12, peripheral proteins PsbO, CyanoQ (PsbQ), PsbU, PsbV and a large number of cofactors. It forms dimeric complexes.

Its subcellular location is the cellular thylakoid membrane. Its function is as follows. One of the extrinsic, lumenal subunits of photosystem II (PSII). PSII is a light-driven water plastoquinone oxidoreductase, using light energy to abstract electrons from H(2)O, generating a proton gradient subsequently used for ATP formation. The extrinsic proteins stabilize the structure of photosystem II oxygen-evolving complex (OEC), the ion environment of oxygen evolution and protect the OEC against heat-induced inactivation. In Trichormus variabilis (strain ATCC 29413 / PCC 7937) (Anabaena variabilis), this protein is Photosystem II extrinsic protein U.